A 366-amino-acid chain; its full sequence is Histidinol-phosphate aminotransferase 2 (366 aa).

Residues 1 to 11 (MQVKDQLSSLQ) show a composition bias toward polar residues. The segment at 1 to 21 (MQVKDQLSSLQPYKPGKSPEQ) is disordered. Residue lysine 222 is modified to N6-(pyridoxal phosphate)lysine.

It belongs to the class-II pyridoxal-phosphate-dependent aminotransferase family. Histidinol-phosphate aminotransferase subfamily. In terms of assembly, homodimer. Pyridoxal 5'-phosphate serves as cofactor.

The catalysed reaction is L-histidinol phosphate + 2-oxoglutarate = 3-(imidazol-4-yl)-2-oxopropyl phosphate + L-glutamate. The protein operates within amino-acid biosynthesis; L-histidine biosynthesis; L-histidine from 5-phospho-alpha-D-ribose 1-diphosphate: step 7/9. The protein is Histidinol-phosphate aminotransferase 2 (hisC2) of Bacillus anthracis.